We begin with the raw amino-acid sequence, 607 residues long: MATSDSRSSPSSSDTEFADPNPSSDPETNSERVQSQLESMNLSQPSEVSDGSHTEFSGGGDDNDDEVASANGNEGGVSNGGLLREGVAGTSGGEVLLRAENPVEMEAGEEPPSPTSSGYDGERGSSGGATSTYKADDGSEDEIREANVDGDTASQHEAAWLPGKRHVDEDDASTSWRKRKKHFFILSNSGKPIYSRYGDEHKLAGFSATLQAIISFVENGGDRVNLVKAGNHQVVFLVKGPIYLVCISCTDETYEYLRGQLDLLYGQMILILTKSIDRCFEKNAKFDMTPLLGGTDAVFSSLVHSFSWNPATFLHAYTCLPLPYALRQATGTILQEVCASGVLFSLLMCRHKVVSLAGAQKASLHPDDLLLLSNFVMSSESFRTSESFSPICLPRYNAQAFLHAYVHFFDDDTYVILLTTRSDAFHHLKDCRVRLEAVLLKSNILSVVQRSIAEGGMRVEDVPIDRRRRSSTTNQEQDSPGPDISVGTGGPFGLWHFMYRSIYLDQYISSEFSPPVTSHRQQKSLYRAYQKLYASMHVKGLGPHKTQYRRDENYTLLCWVTPDFELYAAFDPLADKAMAIKICNQVCQRVKDVENEVFLQGASPFSW.

Low complexity predominate over residues 1-14 (MATSDSRSSPSSSD). Disordered stretches follow at residues 1–173 (MATS…DDAS) and 463–486 (PIDRRRRSSTTNQEQDSPGPDISV). Polar residues predominate over residues 21-55 (NPSSDPETNSERVQSQLESMNLSQPSEVSDGSHTE).

The protein belongs to the MON1/SAND family. In terms of assembly, interacts with CCZ1A, CCZ1B and RABF2B. Widely expressed at stable levels.

Its subcellular location is the endosome. It is found in the prevacuolar compartment. Plays an important role in membrane trafficking through the secretory apparatus. In complex with CCZ1, acts as a guanine exchange factor (GEF) for RABG3F of the Rab7 protein family. Promotes the exchange of GDP to GTP, converting RABG3F from an inactive GDP-bound form into an active GTP-bound form. The RABG3F active form is involved in protein trafficking from prevacuolar compartments (PVCs) to vacuoles. May serve as a linker between Rab5 and Rab7 protein families in PVCs and mediate PVC maturation. This is Vacuolar fusion protein MON1 homolog from Arabidopsis thaliana (Mouse-ear cress).